The chain runs to 376 residues: Alpha-2,8-sialyltransferase 8E (376 aa).

The Cytoplasmic segment spans residues 1–17; the sequence is MRYADPSANRDLLGNRT. Residues 18 to 38 form a helical; Signal-anchor for type II membrane protein membrane-spanning segment; that stretch reads LLFIFICAFALVTLLQQILYG. Over 39–376 the chain is Lumenal; the sequence is RNYIKRYFEF…RVHTGTCSCC (338 aa). 2 N-linked (GlcNAc...) asparagine glycosylation sites follow: Asn56 and Asn96. 2 cysteine pairs are disulfide-bonded: Cys164–Cys313 and Cys178–Cys373. Substrate is bound by residues Asn192 and 214-216; that span reads NPS. N-linked (GlcNAc...) asparagine glycans are attached at residues Asn241 and Asn284. 300 to 302 is a substrate binding site; it reads STG. His348 acts as the Proton donor/acceptor in catalysis.

Belongs to the glycosyltransferase 29 family.

It is found in the golgi apparatus membrane. The catalysed reaction is a ganglioside GQ1c (d18:1(4E)) + CMP-N-acetyl-beta-neuraminate = a ganglioside GP1c (d18:1(4E)) + CMP + H(+). It participates in protein modification; protein glycosylation. In terms of biological role, involved in the synthesis of gangliosides GD1c, GT1a, GQ1b, GP1c and GT3 from GD1a, GT1b, GM1b and GD3 respectively. This Pan troglodytes (Chimpanzee) protein is Alpha-2,8-sialyltransferase 8E (ST8SIA5).